Here is a 486-residue protein sequence, read N- to C-terminus: Chromosomal replication initiator protein DnaA (486 aa).

The interval 1–79 is domain I, interacts with DnaA modulators; the sequence is MEKSKNIWSL…GYNNIVIVFT (79 aa). Residues 79 to 141 form a domain II region; sequence TNQPPKTHSN…EEEPTNFKNP (63 aa). The tract at residues 142 to 358 is domain III, AAA+ region; it reads FLKKRYTFEN…AAVTKLKAYI (217 aa). The ATP site is built by Gly186, Gly188, Lys189, and Thr190. The tract at residues 359-486 is domain IV, binds dsDNA; sequence DLDNIEIDIE…TELMNKIKKN (128 aa).

The protein belongs to the DnaA family. In terms of assembly, oligomerizes as a right-handed, spiral filament on DNA at oriC.

The protein resides in the cytoplasm. Functionally, plays an essential role in the initiation and regulation of chromosomal replication. ATP-DnaA binds to the origin of replication (oriC) to initiate formation of the DNA replication initiation complex once per cell cycle. Binds the DnaA box (a 9 base pair repeat at the origin) and separates the double-stranded (ds)DNA. Forms a right-handed helical filament on oriC DNA; dsDNA binds to the exterior of the filament while single-stranded (ss)DNA is stabiized in the filament's interior. The ATP-DnaA-oriC complex binds and stabilizes one strand of the AT-rich DNA unwinding element (DUE), permitting loading of DNA polymerase. After initiation quickly degrades to an ADP-DnaA complex that is not apt for DNA replication. Binds acidic phospholipids. Binds to the bpuR promoter, possibly at 5'-TTTTTAAA-3'. This is Chromosomal replication initiator protein DnaA from Borreliella burgdorferi (strain ATCC 35210 / DSM 4680 / CIP 102532 / B31) (Borrelia burgdorferi).